We begin with the raw amino-acid sequence, 254 residues long: 3-deoxy-manno-octulosonate cytidylyltransferase (254 aa).

This sequence belongs to the KdsB family.

The protein resides in the cytoplasm. It carries out the reaction 3-deoxy-alpha-D-manno-oct-2-ulosonate + CTP = CMP-3-deoxy-beta-D-manno-octulosonate + diphosphate. The protein operates within nucleotide-sugar biosynthesis; CMP-3-deoxy-D-manno-octulosonate biosynthesis; CMP-3-deoxy-D-manno-octulosonate from 3-deoxy-D-manno-octulosonate and CTP: step 1/1. It participates in bacterial outer membrane biogenesis; lipopolysaccharide biosynthesis. In terms of biological role, activates KDO (a required 8-carbon sugar) for incorporation into bacterial lipopolysaccharide in Gram-negative bacteria. This chain is 3-deoxy-manno-octulosonate cytidylyltransferase, found in Pseudomonas syringae pv. syringae (strain B728a).